Consider the following 449-residue polypeptide: MSHITFDYSKVLESFAGQHEIDFLQGQVTEADKLLREGTGPGSDFLGWLDLPENYDKEEFARILTAAEKIKADSEVLVVIGIGGSYLGAKAAIDFLNHHFANLQTAKERKAPQILYAGNSISSTYLADLVEYVQDKEFSVNVISKSGTTTEPAIAFRVFKELLVKKYGQEEANKRIYATTDKVKGAVKVEADANNWETFVVPDNVGGRFSVLTAVGLLPIAASGADITALMEGANAAHKDLSSDKISENIAYQYAAVRNVLYRKGYITEILANYEPSLQYFGEWWKQLAGESEGKDQKGIYPTSANFSTDLHSLGQFIQEGYRNLFETVIRVDNPRKNVIIPELAEDLDGLGYLQGKDVDFVNKKATDGVLLAHTDGGVPNMFVTLPAQDEFTLGYTIYFFELAIAVSGYMNAVNPFDQPGVEAYKRNMFALLGKPGFEALSAELNARL.

The Proton donor role is filled by E291. Residues H312 and K426 contribute to the active site.

Belongs to the GPI family.

The protein localises to the cytoplasm. The catalysed reaction is alpha-D-glucose 6-phosphate = beta-D-fructose 6-phosphate. The protein operates within carbohydrate biosynthesis; gluconeogenesis. It participates in carbohydrate degradation; glycolysis; D-glyceraldehyde 3-phosphate and glycerone phosphate from D-glucose: step 2/4. In terms of biological role, catalyzes the reversible isomerization of glucose-6-phosphate to fructose-6-phosphate. The sequence is that of Glucose-6-phosphate isomerase from Streptococcus pyogenes serotype M2 (strain MGAS10270).